The following is a 385-amino-acid chain: ATP phosphoribosyltransferase regulatory subunit (385 aa).

The protein belongs to the class-II aminoacyl-tRNA synthetase family. HisZ subfamily. Heteromultimer composed of HisG and HisZ subunits.

Its subcellular location is the cytoplasm. It participates in amino-acid biosynthesis; L-histidine biosynthesis; L-histidine from 5-phospho-alpha-D-ribose 1-diphosphate: step 1/9. In terms of biological role, required for the first step of histidine biosynthesis. May allow the feedback regulation of ATP phosphoribosyltransferase activity by histidine. The chain is ATP phosphoribosyltransferase regulatory subunit from Bordetella avium (strain 197N).